Consider the following 113-residue polypeptide: Large ribosomal subunit protein bL19 (113 aa).

It belongs to the bacterial ribosomal protein bL19 family.

In terms of biological role, this protein is located at the 30S-50S ribosomal subunit interface and may play a role in the structure and function of the aminoacyl-tRNA binding site. In Mycobacterium marinum (strain ATCC BAA-535 / M), this protein is Large ribosomal subunit protein bL19.